Consider the following 326-residue polypeptide: Putative ankyrin repeat protein L25 (326 aa).

ANK repeat units follow at residues 11 to 40, 42 to 65, 66 to 95, 96 to 125, 127 to 154, 155 to 184, 185 to 214, 216 to 244, 246 to 274, and 275 to 304; these read RSEYPLRWASTEGHVEVVIYLVENGADLNV, KLFYVDKYLQVVKYLIENGSNIHV, DDEFTLIYASKGGYLELVNLLIKNGADIHV, NDDAPLKWASKNGHLEVVKYLVENGADIHA, NELVVYASEGGHLQIVKYLVKKGADIHA, EDDEALKWASRSGHLEVVKYLVEKGANFRA, ENDYALRWACEKGHLEIVKYLVEKGADIHA, DEYALRWASRSGHLEVVKYLVENGADIHA, NDYGLRKASRNRHLNVVKYLMENGANIHA, and KDDYALRLASVNGHFKLVKFLVENGANIHA.

The protein is Putative ankyrin repeat protein L25 of Acanthamoeba polyphaga mimivirus (APMV).